Here is a 202-residue protein sequence, read N- to C-terminus: Orotate phosphoribosyltransferase (202 aa).

Residues arginine 94, lysine 98, histidine 100, and 120 to 128 (EDLISTGGS) contribute to the 5-phospho-alpha-D-ribose 1-diphosphate site. Serine 124 lines the orotate pocket.

The protein belongs to the purine/pyrimidine phosphoribosyltransferase family. PyrE subfamily. In terms of assembly, homodimer. Mg(2+) is required as a cofactor.

It carries out the reaction orotidine 5'-phosphate + diphosphate = orotate + 5-phospho-alpha-D-ribose 1-diphosphate. Its pathway is pyrimidine metabolism; UMP biosynthesis via de novo pathway; UMP from orotate: step 1/2. In terms of biological role, catalyzes the transfer of a ribosyl phosphate group from 5-phosphoribose 1-diphosphate to orotate, leading to the formation of orotidine monophosphate (OMP). This chain is Orotate phosphoribosyltransferase, found in Staphylococcus haemolyticus (strain JCSC1435).